The chain runs to 265 residues: Type III pantothenate kinase (265 aa).

9–16 is an ATP binding site; it reads DAGNSRIK. Substrate contacts are provided by residues tyrosine 96 and 103 to 106; that span reads GSDR. Aspartate 105 functions as the Proton acceptor in the catalytic mechanism. Position 129 (threonine 129) interacts with ATP. Threonine 189 lines the substrate pocket.

Belongs to the type III pantothenate kinase family. As to quaternary structure, homodimer. The cofactor is NH4(+). Requires K(+) as cofactor.

Its subcellular location is the cytoplasm. The catalysed reaction is (R)-pantothenate + ATP = (R)-4'-phosphopantothenate + ADP + H(+). The protein operates within cofactor biosynthesis; coenzyme A biosynthesis; CoA from (R)-pantothenate: step 1/5. Its function is as follows. Catalyzes the phosphorylation of pantothenate (Pan), the first step in CoA biosynthesis. In Burkholderia orbicola (strain AU 1054), this protein is Type III pantothenate kinase.